The chain runs to 888 residues: Alanine--tRNA ligase (888 aa).

Zn(2+) contacts are provided by His570, His574, Cys673, and His677.

It belongs to the class-II aminoacyl-tRNA synthetase family. The cofactor is Zn(2+).

It localises to the cytoplasm. The catalysed reaction is tRNA(Ala) + L-alanine + ATP = L-alanyl-tRNA(Ala) + AMP + diphosphate. In terms of biological role, catalyzes the attachment of alanine to tRNA(Ala) in a two-step reaction: alanine is first activated by ATP to form Ala-AMP and then transferred to the acceptor end of tRNA(Ala). Also edits incorrectly charged Ser-tRNA(Ala) and Gly-tRNA(Ala) via its editing domain. The sequence is that of Alanine--tRNA ligase from Chlorobium phaeobacteroides (strain DSM 266 / SMG 266 / 2430).